Here is a 436-residue protein sequence, read N- to C-terminus: Ribulose bisphosphate carboxylase large chain (436 aa).

Residues asparagine 104 and threonine 154 each contribute to the substrate site. Lysine 156 (proton acceptor) is an active-site residue. Position 158 (lysine 158) interacts with substrate. Mg(2+) contacts are provided by lysine 182, aspartate 184, and glutamate 185. Position 182 is an N6-carboxylysine (lysine 182). The active-site Proton acceptor is histidine 275. Residues arginine 276, histidine 308, and serine 360 each coordinate substrate.

It belongs to the RuBisCO large chain family. Type I subfamily. As to quaternary structure, heterohexadecamer of 8 large chains and 8 small chains. Requires Mg(2+) as cofactor.

It is found in the plastid. It localises to the chloroplast. The enzyme catalyses 2 (2R)-3-phosphoglycerate + 2 H(+) = D-ribulose 1,5-bisphosphate + CO2 + H2O. The catalysed reaction is D-ribulose 1,5-bisphosphate + O2 = 2-phosphoglycolate + (2R)-3-phosphoglycerate + 2 H(+). Its function is as follows. RuBisCO catalyzes two reactions: the carboxylation of D-ribulose 1,5-bisphosphate, the primary event in carbon dioxide fixation, as well as the oxidative fragmentation of the pentose substrate in the photorespiration process. Both reactions occur simultaneously and in competition at the same active site. The sequence is that of Ribulose bisphosphate carboxylase large chain from Euglena viridis (Cercaria viridis).